Reading from the N-terminus, the 356-residue chain is DNA integrity scanning protein DisA (356 aa).

The DAC domain occupies 7 to 147 (NKNMLYALKM…EKYVVEDISK (141 aa)). ATP is bound by residues glycine 74, leucine 92, and 105 to 109 (TRHRT).

This sequence belongs to the DisA family. In terms of assembly, homooctamer. Mg(2+) serves as cofactor.

The catalysed reaction is 2 ATP = 3',3'-c-di-AMP + 2 diphosphate. Participates in a DNA-damage check-point that is active prior to asymmetric division when DNA is damaged. DisA forms globular foci that rapidly scan along the chromosomes during sporulation, searching for lesions. When a lesion is present, DisA pauses at the lesion site. This triggers a cellular response that culminates in a temporary block in sporulation initiation. Functionally, also has diadenylate cyclase activity, catalyzing the condensation of 2 ATP molecules into cyclic di-AMP (c-di-AMP). c-di-AMP acts as a signaling molecule that couples DNA integrity with progression of sporulation. The rise in c-di-AMP level generated by DisA while scanning the chromosome, operates as a positive signal that advances sporulation; upon encountering a lesion, the DisA focus arrests at the damaged site and halts c-di-AMP synthesis. The protein is DNA integrity scanning protein DisA of Clostridioides difficile (strain 630) (Peptoclostridium difficile).